We begin with the raw amino-acid sequence, 525 residues long: GMP synthase [glutamine-hydrolyzing] (525 aa).

Positions 9 to 207 (RILILDFGSQ…VLDICRCTPL (199 aa)) constitute a Glutamine amidotransferase type-1 domain. Cysteine 86 (nucleophile) is an active-site residue. Residues histidine 181 and glutamate 183 contribute to the active site. Residues 208 to 400 (WTPAKIIEDA…LGLPYDMLYR (193 aa)) enclose the GMPS ATP-PPase domain. ATP is bound at residue 235–241 (SGGVDSS).

Homodimer.

The enzyme catalyses XMP + L-glutamine + ATP + H2O = GMP + L-glutamate + AMP + diphosphate + 2 H(+). It functions in the pathway purine metabolism; GMP biosynthesis; GMP from XMP (L-Gln route): step 1/1. In terms of biological role, catalyzes the synthesis of GMP from XMP. The protein is GMP synthase [glutamine-hydrolyzing] of Sodalis glossinidius (strain morsitans).